We begin with the raw amino-acid sequence, 1072 residues long: Carbamoyl phosphate synthase large chain (1072 aa).

Positions 1–401 (MPKRLDINTI…SLLKAVRSLE (401 aa)) are carboxyphosphate synthetic domain. Residues Arg129, Arg169, Gly175, Gly176, Lys208, Ile210, Glu215, Gly241, Val242, His243, Gln284, and Glu298 each contribute to the ATP site. The region spanning 133-327 (RTLMQELNEP…IAKLAAKIAV (195 aa)) is the ATP-grasp 1 domain. 3 residues coordinate Mg(2+): Gln284, Glu298, and Asn300. Residues Gln284, Glu298, and Asn300 each coordinate Mn(2+). Positions 402–546 (LGIYHLELDH…YSTYADENES (145 aa)) are oligomerization domain. The segment at 547–929 (IVTDRKSVVV…ALYKGLVASG (383 aa)) is carbamoyl phosphate synthetic domain. An ATP-grasp 2 domain is found at 671–861 (EAALTKLGIP…MANVATKVIL (191 aa)). ATP-binding residues include Arg707, Arg746, Glu752, Gly777, Val778, His779, Ser780, Gln820, and Glu832. The Mg(2+) site is built by Gln820, Glu832, and Asn834. Mn(2+) is bound by residues Gln820, Glu832, and Asn834. The 143-residue stretch at 930–1072 (INIPTHGSVI…QTKRHEVVHA (143 aa)) folds into the MGS-like domain. The segment at 930-1072 (INIPTHGSVI…QTKRHEVVHA (143 aa)) is allosteric domain.

This sequence belongs to the CarB family. In terms of assembly, composed of two chains; the small (or glutamine) chain promotes the hydrolysis of glutamine to ammonia, which is used by the large (or ammonia) chain to synthesize carbamoyl phosphate. Tetramer of heterodimers (alpha,beta)4. The cofactor is Mg(2+). Mn(2+) serves as cofactor.

The enzyme catalyses hydrogencarbonate + L-glutamine + 2 ATP + H2O = carbamoyl phosphate + L-glutamate + 2 ADP + phosphate + 2 H(+). It carries out the reaction hydrogencarbonate + NH4(+) + 2 ATP = carbamoyl phosphate + 2 ADP + phosphate + 2 H(+). The protein operates within amino-acid biosynthesis; L-arginine biosynthesis; carbamoyl phosphate from bicarbonate: step 1/1. It functions in the pathway pyrimidine metabolism; UMP biosynthesis via de novo pathway; (S)-dihydroorotate from bicarbonate: step 1/3. Large subunit of the glutamine-dependent carbamoyl phosphate synthetase (CPSase). CPSase catalyzes the formation of carbamoyl phosphate from the ammonia moiety of glutamine, carbonate, and phosphate donated by ATP, constituting the first step of 2 biosynthetic pathways, one leading to arginine and/or urea and the other to pyrimidine nucleotides. The large subunit (synthetase) binds the substrates ammonia (free or transferred from glutamine from the small subunit), hydrogencarbonate and ATP and carries out an ATP-coupled ligase reaction, activating hydrogencarbonate by forming carboxy phosphate which reacts with ammonia to form carbamoyl phosphate. This chain is Carbamoyl phosphate synthase large chain, found in Bacillus thuringiensis (strain Al Hakam).